A 306-amino-acid polypeptide reads, in one-letter code: Acetyl-coenzyme A carboxylase carboxyl transferase subunit beta (306 aa).

Residues 25–294 (LWIKDPTSGE…VVTPSPPSPT (270 aa)) form the CoA carboxyltransferase N-terminal domain. The interval 284–306 (AVVTPSPPSPTDSQTSLSKTKAA) is disordered.

This sequence belongs to the AccD/PCCB family. As to quaternary structure, acetyl-CoA carboxylase is a heterohexamer composed of biotin carboxyl carrier protein (AccB), biotin carboxylase (AccC) and two subunits each of ACCase subunit alpha (AccA) and ACCase subunit beta (AccD).

Its subcellular location is the cytoplasm. The catalysed reaction is N(6)-carboxybiotinyl-L-lysyl-[protein] + acetyl-CoA = N(6)-biotinyl-L-lysyl-[protein] + malonyl-CoA. It functions in the pathway lipid metabolism; malonyl-CoA biosynthesis; malonyl-CoA from acetyl-CoA: step 1/1. In terms of biological role, component of the acetyl coenzyme A carboxylase (ACC) complex. Biotin carboxylase (BC) catalyzes the carboxylation of biotin on its carrier protein (BCCP) and then the CO(2) group is transferred by the transcarboxylase to acetyl-CoA to form malonyl-CoA. This is Acetyl-coenzyme A carboxylase carboxyl transferase subunit beta from Bartonella tribocorum (strain CIP 105476 / IBS 506).